The chain runs to 152 residues: Protein-export protein SecB (152 aa).

Belongs to the SecB family. In terms of assembly, homotetramer, a dimer of dimers. One homotetramer interacts with 1 SecA dimer.

The protein localises to the cytoplasm. One of the proteins required for the normal export of preproteins out of the cell cytoplasm. It is a molecular chaperone that binds to a subset of precursor proteins, maintaining them in a translocation-competent state. It also specifically binds to its receptor SecA. The sequence is that of Protein-export protein SecB from Rickettsia conorii (strain ATCC VR-613 / Malish 7).